Here is a 418-residue protein sequence, read N- to C-terminus: UDP-N-acetylglucosamine 1-carboxyvinyltransferase (418 aa).

23-24 contacts phosphoenolpyruvate; the sequence is KN. Arg93 provides a ligand contact to UDP-N-acetyl-alpha-D-glucosamine. Asp117 functions as the Proton donor in the catalytic mechanism. UDP-N-acetyl-alpha-D-glucosamine is bound by residues Asp305 and Val327.

This sequence belongs to the EPSP synthase family. MurA subfamily.

The protein resides in the cytoplasm. It carries out the reaction phosphoenolpyruvate + UDP-N-acetyl-alpha-D-glucosamine = UDP-N-acetyl-3-O-(1-carboxyvinyl)-alpha-D-glucosamine + phosphate. It participates in cell wall biogenesis; peptidoglycan biosynthesis. In terms of biological role, cell wall formation. Adds enolpyruvyl to UDP-N-acetylglucosamine. In Mycobacterium leprae (strain TN), this protein is UDP-N-acetylglucosamine 1-carboxyvinyltransferase.